Reading from the N-terminus, the 207-residue chain is MYSAPSACTCLCLHFLLLCFQVQVLVAEENVDFRIHVENQTRARDDVSRKQLRLYQLYSRTSGKHIQVLGRRISARGEDGDKYAQLLVETDTFGSQVRIKGKETEFYLCMNRKGKLVGKPDGTSKECVFIEKVLENNYTALMSAKYSGWYVGFTKKGRPRKGPKTRENQQDVHFMKRYPKGQPELQKPFKYTTVTKRSRRIRPTHPA.

Residues 1 to 27 (MYSAPSACTCLCLHFLLLCFQVQVLVA) form the signal peptide. N-linked (GlcNAc...) asparagine glycosylation is present at Asn39. Cys109 and Cys127 are oxidised to a cystine. N-linked (GlcNAc...) asparagine glycosylation occurs at Asn137. Positions 157–186 (GRPRKGPKTRENQQDVHFMKRYPKGQPELQ) are disordered. Positions 164-174 (KTRENQQDVHF) are enriched in basic and acidic residues.

The protein belongs to the heparin-binding growth factors family. In terms of assembly, interacts with FGFR3 and FGFR4.

The protein resides in the secreted. Its function is as follows. Plays an important role in the regulation of cell proliferation, cell differentiation and cell migration. Required for normal ossification and bone development. Stimulates hepatic and intestinal proliferation. This is Fibroblast growth factor 18 (FGF18) from Homo sapiens (Human).